The chain runs to 648 residues: MSSSRKQARLDAKSNIESLSVQPYPNSKKIYIDGSRPDIRVPMREISLADSLVGGTKENPTLIPNEPIQVYDTSGVYTDPNYDIDVYQGLPKLRERWIEDRTDTEMLKGVSSVYSQERLSDETLDELRYGNLPTIRRAKKGQCVTQLHYARQGIITPEMEYIAIRENMGRQKFADEQLNHQHPGHSFGANLPKEITPEFVRNEVAEGRAIIPANINHPEAEPMIIGRNFLIKVNANIGNSSVSSSIEEEVEKLVWSTRWGGDTVMDLSTGRNIHETREWILRNSPVPIGTVPMYQALEKVNGVAENLNWEVMRDTLIEQAEQGVDYFTIHAGLLLRYVPMTAKRVTGIVSRGGSIIAKWCLAHHQESFLYTHFREICEICAKYDVSLSLGDGLRPGSIADANDEAQFAELRTLGELTKVAWEYDVQVIIEGPGHVPMHMIKENMDEQLKHCHEAPFYTLGPLTTDIAPGYDHITSGIGAAMIGWYGCAMLCYVTPKEHLGLPNKEDVKIGLITYKLAAHAGDLAKGHPGAQIRDNALSKARFEFRWEDQFNLSLDPITAREFHDETLPQESGKVAHFCSMCGPKFCSMKISQEVREYAKDTEQVALDQAINIKMLDDPLEGMRQKSAEFKASGSELYHPAVDAEPVKS.

Substrate contacts are provided by residues Asn-236, Met-265, Tyr-294, His-330, Ser-350–Gly-352, Asp-391–Arg-394, and Glu-430. His-434 serves as a coordination point for Zn(2+). Residue Tyr-457 participates in substrate binding. His-498 contributes to the Zn(2+) binding site. [4Fe-4S] cluster contacts are provided by Cys-578, Cys-581, and Cys-586.

It belongs to the ThiC family. Homodimer. The cofactor is [4Fe-4S] cluster.

It carries out the reaction 5-amino-1-(5-phospho-beta-D-ribosyl)imidazole + S-adenosyl-L-methionine = 4-amino-2-methyl-5-(phosphooxymethyl)pyrimidine + CO + 5'-deoxyadenosine + formate + L-methionine + 3 H(+). Its pathway is cofactor biosynthesis; thiamine diphosphate biosynthesis. Its function is as follows. Catalyzes the synthesis of the hydroxymethylpyrimidine phosphate (HMP-P) moiety of thiamine from aminoimidazole ribotide (AIR) in a radical S-adenosyl-L-methionine (SAM)-dependent reaction. This chain is Phosphomethylpyrimidine synthase, found in Aliivibrio salmonicida (strain LFI1238) (Vibrio salmonicida (strain LFI1238)).